Consider the following 340-residue polypeptide: CMP-sialic acid transporter 1 (340 aa).

At 1 to 5 the chain is on the cytoplasmic side; that stretch reads MAATP. The helical transmembrane segment at 6–26 threads the bilayer; sequence WYFVAVLLTILTSSQGILTTL. Topologically, residues 27–36 are lumenal; sequence SQSDGGYKYD. A helical transmembrane segment spans residues 37-57; that stretch reads YATVPFLAEVFKLIISGLFLW. Over 58-78 the chain is Cytoplasmic; that stretch reads REMRTSSSTTSRITTDWKSVR. Residues 79–99 form a helical membrane-spanning segment; the sequence is LFVIPSLIYLIHNNVQFATLT. Topologically, residues 100 to 102 are lumenal; the sequence is YVD. Residues 103-125 form a helical membrane-spanning segment; it reads TSTYQIMGNLKIVTTGILFRLFL. Topologically, residues 126–168 are cytoplasmic; the sequence is KRKLSKLQWMAIGLLAVGTTTSQVKGCGEASCDSLFTAPIQGY. Residues 169-189 traverse the membrane as a helical segment; the sequence is LLGILSAGLSALAGIYTEFLM. Residues 190–200 are Lumenal-facing; sequence KRNNDTLYWQN. A helical membrane pass occupies residues 201–217; the sequence is LQLYTFGSLFNVARLIA. The Cytoplasmic portion of the chain corresponds to 218–238; that stretch reads DDFRHGFEKGPWWQRIFDGYS. Residues 239–259 traverse the membrane as a helical segment; the sequence is ITTWLVVLNLGSTGLLVSWLM. Residues 260-282 lie on the Lumenal side of the membrane; the sequence is KYADNIVKVYSTSMAMLLTMVAS. The chain crosses the membrane as a helical span at residues 283–303; the sequence is IYLFSFKPTLQLFLGIVICIM. Topologically, residues 304–340 are cytoplasmic; that stretch reads SLHMYFAPPHTLVDLPVTNEAHAKTLKQVVVEEKTDS.

The protein belongs to the nucleotide-sugar transporter family. CMP-Sialate:CMP antiporter (TC 2.A.7.12) subfamily.

It localises to the golgi apparatus membrane. Functionally, essential protein. Sugar transporter involved in the transport of CMP-sialic acid from the cytoplasm into the Golgi. The protein is CMP-sialic acid transporter 1 of Arabidopsis thaliana (Mouse-ear cress).